Consider the following 414-residue polypeptide: MSGIIATYLIHDDSHNLEKKAEQIALGLTIGSWTHLPHLLQEQLKQHKGNVIHVEELAAHEHTNSYLRKKVKRGIIKIEYPLLNFSPDLPAILTTTFGKLSLDGEVKLIDLTFSDELKKQFPGPKFGIDGIRNLLQVHDRPLLMSIFKGMIGRNIGYLKTQLRDQAIGGVDIVKDDEILFENALTPLTKRIVSGKEVLQSVYETYGHKTLYAVNLTGRTFDLKENAKRAVQAGADILLFNVFSYGLDVLQSLAEDDEIPLPIMAHPAVSGAYSASKLYGVSSPLLLGKLLRYAGADFSLFPSPYGSVALEKEEALAISKYLTEGDSFFKKSFSVPSAGIHPGFVPFIVRDFGKDVVINAGGGIHGHPNGAQGGGKAFRAAIDATLQNKPLHEVDDINLHSALQIWGNPSHEVKL.

The active-site Proton acceptor is Lys-99. Substrate-binding positions include Lys-148, 174–177, His-265, Gly-338, and 360–361; these read KDDE and GG. Lys-174, Asp-176, and Glu-177 together coordinate Mg(2+). N6-carboxylysine is present on Lys-174.

Belongs to the RuBisCO large chain family. Type IV subfamily. Homodimer. Requires Mg(2+) as cofactor.

It carries out the reaction 5-methylsulfanyl-2,3-dioxopentyl phosphate = 2-hydroxy-5-methylsulfanyl-3-oxopent-1-enyl phosphate. It functions in the pathway amino-acid biosynthesis; L-methionine biosynthesis via salvage pathway; L-methionine from S-methyl-5-thio-alpha-D-ribose 1-phosphate: step 3/6. Catalyzes the enolization of 2,3-diketo-5-methylthiopentyl-1-phosphate (DK-MTP-1-P) into 2-hydroxy-3-keto-5-methylthiopentenyl-1-phosphate (HK-MTPenyl-1-P). The polypeptide is 2,3-diketo-5-methylthiopentyl-1-phosphate enolase (Bacillus cereus (strain ATCC 10987 / NRS 248)).